We begin with the raw amino-acid sequence, 163 residues long: Nucleotide-binding protein KPN78578_03700 (163 aa).

The protein belongs to the YajQ family.

Nucleotide-binding protein. In Klebsiella pneumoniae subsp. pneumoniae (strain ATCC 700721 / MGH 78578), this protein is Nucleotide-binding protein KPN78578_03700.